Reading from the N-terminus, the 508-residue chain is Probable polyol transporter 3 (508 aa).

12 helical membrane passes run 21-41 (FAFG…YDTG), 60-80 (QIEV…LTAG), 90-110 (YTIA…GYGP), 120-140 (CIAG…SAEI), 147-167 (GFLT…GYVS), 178-198 (LGWR…AFGI), 280-300 (ILIA…EAVV), 318-338 (LLLA…IATF), 348-368 (LLLT…VSLT), 384-404 (IVST…ITWV), 418-438 (GASI…MSFL), and 448-468 (GVFF…FFML).

The protein belongs to the major facilitator superfamily. Sugar transporter (TC 2.A.1.1) family.

The protein localises to the membrane. Plasma membrane sugar-proton symporter. The polypeptide is Probable polyol transporter 3 (PLT3) (Arabidopsis thaliana (Mouse-ear cress)).